The sequence spans 153 residues: Glucose-6-phosphate 1-dehydrogenase (153 aa).

2 residues coordinate NADP(+): arginine 21 and lysine 120. Lysine 120 is a D-glucose 6-phosphate binding site.

It belongs to the glucose-6-phosphate dehydrogenase family.

The protein localises to the cytoplasm. It is found in the cytosol. It catalyses the reaction D-glucose 6-phosphate + NADP(+) = 6-phospho-D-glucono-1,5-lactone + NADPH + H(+). It functions in the pathway carbohydrate degradation; pentose phosphate pathway; D-ribulose 5-phosphate from D-glucose 6-phosphate (oxidative stage): step 1/3. Functionally, cytosolic glucose-6-phosphate dehydrogenase that catalyzes the first and rate-limiting step of the oxidative branch within the pentose phosphate pathway/shunt, an alternative route to glycolysis for the dissimilation of carbohydrates and a major source of reducing power and metabolic intermediates for fatty acid and nucleic acid biosynthetic processes. The chain is Glucose-6-phosphate 1-dehydrogenase (ZW) from Hyalophora cecropia (Cecropia moth).